The chain runs to 447 residues: Na(+)/H(+) antiporter NhaA 2 (447 aa).

11 helical membrane-spanning segments follow: residues 30 to 50 (FIHI…LAVL), 81 to 101 (LHKW…ALEL), 117 to 137 (LLSI…YLLL), 146 to 166 (GWGT…ALLG), 175 to 195 (IFML…VAIG), 199 to 219 (AVDW…RAMA), 220 to 240 (FLGV…WLVI), 315 to 335 (LLHP…NAGV), 350 to 370 (VFVG…WIAV), 383 to 403 (WGMV…ALFI), and 415 to 435 (AAKL…FLCL).

The protein belongs to the NhaA Na(+)/H(+) (TC 2.A.33) antiporter family.

It localises to the cell inner membrane. It catalyses the reaction Na(+)(in) + 2 H(+)(out) = Na(+)(out) + 2 H(+)(in). Its function is as follows. Na(+)/H(+) antiporter that extrudes sodium in exchange for external protons. This chain is Na(+)/H(+) antiporter NhaA 2, found in Vibrio vulnificus (strain CMCP6).